Reading from the N-terminus, the 448-residue chain is MSASAVNVNPGRNVVVVGTQWGDEGKGKIVDWLTDHAQGVVRFQGGHNAGHTLIIGGKKTILRLIPSGIMRPGVACYIGNGVVLSPEALFKEIEELESAGIDVQKRLFISEATTLILPYHVAIDQAREARSGAGKIGTTGRGIGPAYEDKVARRGLRVQDLFEPKAFAERLRANLDFHNFVLTQYLGAPAVDYQQTLDMMLSYADRLKPMVTDVSRRLYDENHVGNNLLFEGAQGTLLDIDHGTYPFVTSSNCVAGAATAGAGIGPQKLDYILGITKAYCTRVGSGPFPSELYDADNANRQEEVGLTLAKVGKEFGSVTGRPRRTGWLDAAALRRAIQINGVSGLCITKLDVLDGLDEVKLCVGYTIDGKDADILPRGAYEVSRCEPVYETFGGWKESTVGIKEWNKLPANAQAYLTRVQEVAGVPIDMVSTGPDRDETILLRHPFKV.

Residues 22–28 (GDEGKGK) and 50–52 (GHT) each bind GTP. D23 functions as the Proton acceptor in the catalytic mechanism. 2 residues coordinate Mg(2+): D23 and G50. IMP-binding positions include 23–26 (DEGK), 48–51 (NAGH), T139, R153, Q234, T249, and R321. H51 functions as the Proton donor in the catalytic mechanism. A substrate-binding site is contributed by 317-323 (SVTGRPR). GTP is bound by residues R323, 349-351 (KLD), and 431-433 (STG).

This sequence belongs to the adenylosuccinate synthetase family. As to quaternary structure, homodimer. The cofactor is Mg(2+).

The protein localises to the cytoplasm. It catalyses the reaction IMP + L-aspartate + GTP = N(6)-(1,2-dicarboxyethyl)-AMP + GDP + phosphate + 2 H(+). It participates in purine metabolism; AMP biosynthesis via de novo pathway; AMP from IMP: step 1/2. Plays an important role in the de novo pathway of purine nucleotide biosynthesis. Catalyzes the first committed step in the biosynthesis of AMP from IMP. The sequence is that of Adenylosuccinate synthetase from Paraburkholderia phymatum (strain DSM 17167 / CIP 108236 / LMG 21445 / STM815) (Burkholderia phymatum).